A 332-amino-acid chain; its full sequence is GTPase Obg (332 aa).

One can recognise an Obg domain in the interval 1 to 159 (MKFLDQAKIY…RWVWLRLKLI (159 aa)). In terms of domain architecture, OBG-type G spans 160–328 (ADAGLVGLPN…VLRETLRMIR (169 aa)). GTP-binding positions include 166 to 173 (GLPNAGKS), 191 to 195 (FTTLH), 213 to 216 (DIPG), 280 to 283 (NKMD), and 309 to 311 (SAA). The Mg(2+) site is built by serine 173 and threonine 193.

This sequence belongs to the TRAFAC class OBG-HflX-like GTPase superfamily. OBG GTPase family. As to quaternary structure, monomer. It depends on Mg(2+) as a cofactor.

It is found in the cytoplasm. Functionally, an essential GTPase which binds GTP, GDP and possibly (p)ppGpp with moderate affinity, with high nucleotide exchange rates and a fairly low GTP hydrolysis rate. Plays a role in control of the cell cycle, stress response, ribosome biogenesis and in those bacteria that undergo differentiation, in morphogenesis control. In Acidiphilium cryptum (strain JF-5), this protein is GTPase Obg.